Reading from the N-terminus, the 1441-residue chain is Lysophospholipase NTE1 (1441 aa).

Over methionine 1 to threonine 22 the chain is Lumenal. A helical transmembrane segment spans residues leucine 23–leucine 43. Over arginine 44–isoleucine 1441 the chain is Cytoplasmic. Disordered regions lie at residues serine 154–aspartate 173, threonine 210–isoleucine 236, glutamine 376–serine 445, and asparagine 551–asparagine 585. Positions glutamine 376–lysine 388 are enriched in polar residues. Basic and acidic residues predominate over residues serine 572 to asparagine 585. Residues asparagine 592–serine 718 and isoleucine 707–lysine 836 contribute to the a nucleoside 3',5'-cyclic phosphate site. The region spanning leucine 1137–threonine 1301 is the PNPLA domain. The short motif at glycine 1141–glycine 1146 is the GXGXXG element. Residues glycine 1168–glycine 1172 carry the GXSXG motif. Serine 1170 functions as the Nucleophile in the catalytic mechanism. Catalysis depends on aspartate 1288, which acts as the Proton acceptor. Residues aspartate 1288–glycine 1290 carry the DGA/G motif.

This sequence belongs to the NTE family.

It localises to the endoplasmic reticulum membrane. It catalyses the reaction a 1-acyl-sn-glycero-3-phosphocholine + H2O = sn-glycerol 3-phosphocholine + a fatty acid + H(+). With respect to regulation, inhibited by organophosphorus esters. Functionally, intracellular phospholipase B that catalyzes the double deacylation of phosphatidylcholine (PC) to glycerophosphocholine (GroPCho). Plays an important role in membrane lipid homeostasis. Responsible for the rapid PC turnover in response to inositol, elevated temperatures, or when choline is present in the growth medium. The protein is Lysophospholipase NTE1 (NTE1) of Kluyveromyces lactis (strain ATCC 8585 / CBS 2359 / DSM 70799 / NBRC 1267 / NRRL Y-1140 / WM37) (Yeast).